Reading from the N-terminus, the 128-residue chain is Large ribosomal subunit protein bL12 (128 aa).

This sequence belongs to the bacterial ribosomal protein bL12 family. In terms of assembly, homodimer. Part of the ribosomal stalk of the 50S ribosomal subunit. Forms a multimeric L10(L12)X complex, where L10 forms an elongated spine to which 2 to 4 L12 dimers bind in a sequential fashion. Binds GTP-bound translation factors.

In terms of biological role, forms part of the ribosomal stalk which helps the ribosome interact with GTP-bound translation factors. Is thus essential for accurate translation. The protein is Large ribosomal subunit protein bL12 of Petrotoga mobilis (strain DSM 10674 / SJ95).